We begin with the raw amino-acid sequence, 315 residues long: DNA-directed RNA polymerase subunit alpha (315 aa).

The alpha N-terminal domain (alpha-NTD) stretch occupies residues 1–228; that stretch reads MIGMEKPKIE…EHLELFISLT (228 aa). Residues 245-315 are alpha C-terminal domain (alpha-CTD); sequence RNKLMEMTIE…FGLSLRQPDD (71 aa).

Belongs to the RNA polymerase alpha chain family. In terms of assembly, homodimer. The RNAP catalytic core consists of 2 alpha, 1 beta, 1 beta' and 1 omega subunit. When a sigma factor is associated with the core the holoenzyme is formed, which can initiate transcription.

The enzyme catalyses RNA(n) + a ribonucleoside 5'-triphosphate = RNA(n+1) + diphosphate. In terms of biological role, DNA-dependent RNA polymerase catalyzes the transcription of DNA into RNA using the four ribonucleoside triphosphates as substrates. The protein is DNA-directed RNA polymerase subunit alpha of Symbiobacterium thermophilum (strain DSM 24528 / JCM 14929 / IAM 14863 / T).